The following is a 453-amino-acid chain: Ribulose bisphosphate carboxylase large chain (453 aa).

Residues 1–2 (MS) constitute a propeptide that is removed on maturation. P3 carries the N-acetylproline modification. K14 carries the N6,N6,N6-trimethyllysine modification. 2 residues coordinate substrate: N123 and T173. The active-site Proton acceptor is K175. K177 contacts substrate. Mg(2+)-binding residues include K201, D203, and E204. Residue K201 is modified to N6-carboxylysine. The active-site Proton acceptor is the H294. Substrate contacts are provided by R295, H327, and S379.

It belongs to the RuBisCO large chain family. Type I subfamily. As to quaternary structure, heterohexadecamer of 8 large chains and 8 small chains; disulfide-linked. The disulfide link is formed within the large subunit homodimers. It depends on Mg(2+) as a cofactor. In terms of processing, the disulfide bond which can form in the large chain dimeric partners within the hexadecamer appears to be associated with oxidative stress and protein turnover.

Its subcellular location is the plastid. It is found in the chloroplast. It catalyses the reaction 2 (2R)-3-phosphoglycerate + 2 H(+) = D-ribulose 1,5-bisphosphate + CO2 + H2O. It carries out the reaction D-ribulose 1,5-bisphosphate + O2 = 2-phosphoglycolate + (2R)-3-phosphoglycerate + 2 H(+). Its function is as follows. RuBisCO catalyzes two reactions: the carboxylation of D-ribulose 1,5-bisphosphate, the primary event in carbon dioxide fixation, as well as the oxidative fragmentation of the pentose substrate in the photorespiration process. Both reactions occur simultaneously and in competition at the same active site. This Rubia tinctorum (Madder) protein is Ribulose bisphosphate carboxylase large chain.